Consider the following 545-residue polypeptide: Threonine--tRNA ligase catalytic subunit (545 aa).

The catalytic stretch occupies residues 139–433 (DHRLIGEKLD…LLEHFKGKLP (295 aa)). 3 residues coordinate Zn(2+): Cys231, His282, and His410.

Belongs to the class-II aminoacyl-tRNA synthetase family. Homodimer. Probably interacts with its editing subunit. Zn(2+) is required as a cofactor.

It is found in the cytoplasm. The catalysed reaction is tRNA(Thr) + L-threonine + ATP = L-threonyl-tRNA(Thr) + AMP + diphosphate + H(+). Functionally, catalyzes the attachment of threonine to tRNA(Thr) in a two-step reaction: L-threonine is first activated by ATP to form Thr-AMP and then transferred to the acceptor end of tRNA(Thr). Also activates L-serine and transfers it to tRNA(Thr) but cannot deacylate incorrectly charged amino acid; unlike most archaea the editing function is found in a freestanding protein. This Saccharolobus islandicus (strain M.16.27) (Sulfolobus islandicus) protein is Threonine--tRNA ligase catalytic subunit.